We begin with the raw amino-acid sequence, 376 residues long: CC-adding tRNA nucleotidyltransferase (376 aa).

26-29 (GAVR) lines the CTP pocket. D39 and D41 together coordinate Mg(2+). CTP-binding positions include 94–95 (RD), N99, 136–145 (DPLRMLRAAR), and R176.

The protein belongs to the tRNA nucleotidyltransferase/poly(A) polymerase family. The cofactor is Mg(2+).

It carries out the reaction a tRNA precursor + 2 CTP = a tRNA with a 3' CC end + 2 diphosphate. TRNA nucleotidyltransferase involved in the synthesis of the tRNA CCA terminus. Adds the two cytidine residues to tRNA. The sequence is that of CC-adding tRNA nucleotidyltransferase from Shouchella clausii (strain KSM-K16) (Alkalihalobacillus clausii).